The following is a 307-amino-acid chain: Holliday junction branch migration complex subunit RuvB (307 aa).

The large ATPase domain (RuvB-L) stretch occupies residues 1–167 (MKLQIKPPNN…FGMILNIDYY (167 aa)). Residues isoleucine 5, glycine 48, lysine 51, threonine 52, threonine 53, 114 to 116 (DDF), arginine 157, tyrosine 167, and arginine 204 contribute to the ATP site. Threonine 52 is a Mg(2+) binding site. Residues 168-233 (SNQEIERIVS…DLAALFKSLM (66 aa)) are small ATPAse domain (RuvB-S). Residues 236–307 (KNGLQSIDVQ…RTGRNYLTSC (72 aa)) form a head domain (RuvB-H) region. 2 residues coordinate DNA: lysine 289 and arginine 294.

The protein belongs to the RuvB family. In terms of assembly, homohexamer. Forms an RuvA(8)-RuvB(12)-Holliday junction (HJ) complex. HJ DNA is sandwiched between 2 RuvA tetramers; dsDNA enters through RuvA and exits via RuvB. An RuvB hexamer assembles on each DNA strand where it exits the tetramer. Each RuvB hexamer is contacted by two RuvA subunits (via domain III) on 2 adjacent RuvB subunits; this complex drives branch migration. In the full resolvosome a probable DNA-RuvA(4)-RuvB(12)-RuvC(2) complex forms which resolves the HJ.

The protein resides in the cytoplasm. It catalyses the reaction ATP + H2O = ADP + phosphate + H(+). The RuvA-RuvB-RuvC complex processes Holliday junction (HJ) DNA during genetic recombination and DNA repair, while the RuvA-RuvB complex plays an important role in the rescue of blocked DNA replication forks via replication fork reversal (RFR). RuvA specifically binds to HJ cruciform DNA, conferring on it an open structure. The RuvB hexamer acts as an ATP-dependent pump, pulling dsDNA into and through the RuvAB complex. RuvB forms 2 homohexamers on either side of HJ DNA bound by 1 or 2 RuvA tetramers; 4 subunits per hexamer contact DNA at a time. Coordinated motions by a converter formed by DNA-disengaged RuvB subunits stimulates ATP hydrolysis and nucleotide exchange. Immobilization of the converter enables RuvB to convert the ATP-contained energy into a lever motion, pulling 2 nucleotides of DNA out of the RuvA tetramer per ATP hydrolyzed, thus driving DNA branch migration. The RuvB motors rotate together with the DNA substrate, which together with the progressing nucleotide cycle form the mechanistic basis for DNA recombination by continuous HJ branch migration. Branch migration allows RuvC to scan DNA until it finds its consensus sequence, where it cleaves and resolves cruciform DNA. The sequence is that of Holliday junction branch migration complex subunit RuvB from Mycoplasma pneumoniae (strain ATCC 29342 / M129 / Subtype 1) (Mycoplasmoides pneumoniae).